The primary structure comprises 266 residues: 4-hydroxy-tetrahydrodipicolinate reductase (266 aa).

Position 10–15 (10–15 (GPRGRM)) interacts with NAD(+). Lys-38 lines the NADP(+) pocket. NAD(+) is bound by residues 99–101 (GTT) and 125–128 (APNF). The Proton donor/acceptor role is filled by His-155. His-156 contacts (S)-2,3,4,5-tetrahydrodipicolinate. The active-site Proton donor is Lys-159. 165 to 166 (GT) is a (S)-2,3,4,5-tetrahydrodipicolinate binding site.

This sequence belongs to the DapB family.

The protein resides in the cytoplasm. It catalyses the reaction (S)-2,3,4,5-tetrahydrodipicolinate + NAD(+) + H2O = (2S,4S)-4-hydroxy-2,3,4,5-tetrahydrodipicolinate + NADH + H(+). The enzyme catalyses (S)-2,3,4,5-tetrahydrodipicolinate + NADP(+) + H2O = (2S,4S)-4-hydroxy-2,3,4,5-tetrahydrodipicolinate + NADPH + H(+). Its pathway is amino-acid biosynthesis; L-lysine biosynthesis via DAP pathway; (S)-tetrahydrodipicolinate from L-aspartate: step 4/4. Its function is as follows. Catalyzes the conversion of 4-hydroxy-tetrahydrodipicolinate (HTPA) to tetrahydrodipicolinate. This is 4-hydroxy-tetrahydrodipicolinate reductase from Bacillus anthracis (strain A0248).